Consider the following 1299-residue polypeptide: DNA-directed RNA polymerase subunit beta' (1299 aa).

Residues Cys-60, Cys-62, Cys-75, and Cys-78 each contribute to the Zn(2+) site. 3 residues coordinate Mg(2+): Asp-535, Asp-537, and Asp-539. 4 residues coordinate Zn(2+): Cys-877, Cys-954, Cys-961, and Cys-964.

It belongs to the RNA polymerase beta' chain family. The RNAP catalytic core consists of 2 alpha, 1 beta, 1 beta' and 1 omega subunit. When a sigma factor is associated with the core the holoenzyme is formed, which can initiate transcription. Requires Mg(2+) as cofactor. Zn(2+) is required as a cofactor.

The catalysed reaction is RNA(n) + a ribonucleoside 5'-triphosphate = RNA(n+1) + diphosphate. DNA-dependent RNA polymerase catalyzes the transcription of DNA into RNA using the four ribonucleoside triphosphates as substrates. The sequence is that of DNA-directed RNA polymerase subunit beta' from Pseudarthrobacter chlorophenolicus (strain ATCC 700700 / DSM 12829 / CIP 107037 / JCM 12360 / KCTC 9906 / NCIMB 13794 / A6) (Arthrobacter chlorophenolicus).